Here is a 483-residue protein sequence, read N- to C-terminus: Endoplasmic reticulum lectin 1 (483 aa).

Positions 1–33 are cleaved as a signal peptide; the sequence is MEEGGGGVRSLVPGGPVLLVLCGLLEASGGGRA. 2 consecutive MRH domains span residues 111 to 246 and 342 to 469; these read SSCS…LCSH and SYCF…ICKI. Cys113 and Cys126 are joined by a disulfide. The N-linked (GlcNAc...) asparagine glycan is linked to Asn195. 5 disulfide bridges follow: Cys199–Cys232, Cys215–Cys244, Cys344–Cys357, Cys421–Cys455, and Cys436–Cys467.

May form a complex with OS9, HSPA5, SYVN1, and SEL1L with which it interacts directly. Interacts (via PRKCSH 2 domain) with KREMEN2 (when glycosylated). Interacts with HSPA5. Isoform 1 and isoform 2 are N-glycosylated.

Its subcellular location is the endoplasmic reticulum lumen. Functionally, probable lectin that binds selectively to improperly folded lumenal proteins. May function in endoplasmic reticulum quality control and endoplasmic reticulum-associated degradation (ERAD) of both non-glycosylated proteins and glycoproteins. The chain is Endoplasmic reticulum lectin 1 (ERLEC1) from Homo sapiens (Human).